The chain runs to 482 residues: ATP-dependent rRNA helicase rrp3 (482 aa).

Residues M1–T55 are disordered. The segment covering E44 to E53 has biased composition (acidic residues). A Q motif motif is present at residues K56 to R84. In terms of domain architecture, Helicase ATP-binding spans I87–V258. ATP is bound at residue A100–T107. The short motif at D206–D209 is the DEAD box element. A Helicase C-terminal domain is found at H282–M430. Composition is skewed to basic and acidic residues over residues R444–K456 and R472–G482. Positions R444–G482 are disordered.

The protein belongs to the DEAD box helicase family. DDX47/RRP3 subfamily. Interacts with the SSU processome.

Its subcellular location is the nucleus. It catalyses the reaction ATP + H2O = ADP + phosphate + H(+). ATP-dependent rRNA helicase required for pre-ribosomal RNA processing. Involved in the maturation of the 35S-pre-rRNA and to its cleavage to mature 18S rRNA. The polypeptide is ATP-dependent rRNA helicase rrp3 (Sclerotinia sclerotiorum (strain ATCC 18683 / 1980 / Ss-1) (White mold)).